A 190-amino-acid chain; its full sequence is Peptidyl-tRNA hydrolase (190 aa).

Y14 is a binding site for tRNA. H19 functions as the Proton acceptor in the catalytic mechanism. Residues Y64 and N66 each contribute to the tRNA site.

The protein belongs to the PTH family. As to quaternary structure, monomer.

The protein resides in the cytoplasm. It carries out the reaction an N-acyl-L-alpha-aminoacyl-tRNA + H2O = an N-acyl-L-amino acid + a tRNA + H(+). Hydrolyzes ribosome-free peptidyl-tRNAs (with 1 or more amino acids incorporated), which drop off the ribosome during protein synthesis, or as a result of ribosome stalling. Its function is as follows. Catalyzes the release of premature peptidyl moieties from peptidyl-tRNA molecules trapped in stalled 50S ribosomal subunits, and thus maintains levels of free tRNAs and 50S ribosomes. The polypeptide is Peptidyl-tRNA hydrolase (Rhodopirellula baltica (strain DSM 10527 / NCIMB 13988 / SH1)).